We begin with the raw amino-acid sequence, 1029 residues long: Carbamoyl phosphate synthase large chain (1029 aa).

The tract at residues 1-402 is carboxyphosphate synthetic domain; that stretch reads MPKRTDLQTI…SLQKALRSTE (402 aa). Arg-129, Arg-169, Gly-175, Gly-176, Glu-208, Ile-210, Glu-215, Gly-241, Val-242, His-243, Gln-285, and Glu-299 together coordinate ATP. The ATP-grasp 1 domain occupies 133-328; that stretch reads QAAMKKIGVE…IAKIAALLAV (196 aa). Residues Gln-285, Glu-299, and Asn-301 each coordinate Mg(2+). Positions 285, 299, and 301 each coordinate Mn(2+). The tract at residues 403-544 is oligomerization domain; it reads SDIRGVYAEM…YHYSTYEWED (142 aa). The tract at residues 545 to 929 is carbamoyl phosphate synthetic domain; that stretch reads EVTGTDKPKV…AFYRAQLGAK (385 aa). An ATP-grasp 2 domain is found at 671 to 863; sequence NALCERLGLS…LAKSAARIAV (193 aa). Residues Arg-707, Gln-747, Leu-749, Glu-754, Gly-779, Val-780, His-781, Ser-782, Gln-822, and Glu-834 each coordinate ATP. Residues Gln-822, Glu-834, and Asn-836 each contribute to the Mg(2+) site. Mn(2+) is bound by residues Gln-822, Glu-834, and Asn-836. The MGS-like domain occupies 930-1028; the sequence is SYLPLSGTAL…QDWQTQEAVA (99 aa). The allosteric domain stretch occupies residues 930–1029; that stretch reads SYLPLSGTAL…DWQTQEAVAG (100 aa).

The protein belongs to the CarB family. As to quaternary structure, composed of two chains; the small (or glutamine) chain promotes the hydrolysis of glutamine to ammonia, which is used by the large (or ammonia) chain to synthesize carbamoyl phosphate. Tetramer of heterodimers (alpha,beta)4. It depends on Mg(2+) as a cofactor. Mn(2+) is required as a cofactor.

It carries out the reaction hydrogencarbonate + L-glutamine + 2 ATP + H2O = carbamoyl phosphate + L-glutamate + 2 ADP + phosphate + 2 H(+). The enzyme catalyses hydrogencarbonate + NH4(+) + 2 ATP = carbamoyl phosphate + 2 ADP + phosphate + 2 H(+). Its pathway is amino-acid biosynthesis; L-arginine biosynthesis; carbamoyl phosphate from bicarbonate: step 1/1. It functions in the pathway pyrimidine metabolism; UMP biosynthesis via de novo pathway; (S)-dihydroorotate from bicarbonate: step 1/3. Its function is as follows. Large subunit of the glutamine-dependent carbamoyl phosphate synthetase (CPSase). CPSase catalyzes the formation of carbamoyl phosphate from the ammonia moiety of glutamine, carbonate, and phosphate donated by ATP, constituting the first step of 2 biosynthetic pathways, one leading to arginine and/or urea and the other to pyrimidine nucleotides. The large subunit (synthetase) binds the substrates ammonia (free or transferred from glutamine from the small subunit), hydrogencarbonate and ATP and carries out an ATP-coupled ligase reaction, activating hydrogencarbonate by forming carboxy phosphate which reacts with ammonia to form carbamoyl phosphate. This chain is Carbamoyl phosphate synthase large chain, found in Deinococcus deserti (strain DSM 17065 / CIP 109153 / LMG 22923 / VCD115).